A 348-amino-acid chain; its full sequence is Uroporphyrinogen decarboxylase (348 aa).

Residues 27–31, phenylalanine 46, aspartate 76, tyrosine 152, serine 207, and histidine 320 each bind substrate; that span reads RQAGR.

This sequence belongs to the uroporphyrinogen decarboxylase family. Homodimer.

The protein localises to the cytoplasm. It carries out the reaction uroporphyrinogen III + 4 H(+) = coproporphyrinogen III + 4 CO2. It functions in the pathway porphyrin-containing compound metabolism; protoporphyrin-IX biosynthesis; coproporphyrinogen-III from 5-aminolevulinate: step 4/4. Its function is as follows. Catalyzes the decarboxylation of four acetate groups of uroporphyrinogen-III to yield coproporphyrinogen-III. This is Uroporphyrinogen decarboxylase from Bacillus cereus (strain AH820).